We begin with the raw amino-acid sequence, 468 residues long: Putative ankyrin repeat protein R873 (468 aa).

ANK repeat units follow at residues 38-68 (IKTD…KHNL), 78-107 (SLNE…DIEG), 109-137 (DNCA…NFRA), 138-167 (NNDK…DIRS), 169-197 (NDCS…NIRT), 198-227 (NDDW…DIRS), 229-257 (DDHA…NIIA), 258-287 (EDNY…NITS), 289-316 (YYTI…NIRD), 317-346 (CDSS…DFRE), 348-376 (DDLT…DFRV), 378-406 (DDYP…DVRA), 407-436 (EDDY…NIRA), and 438-466 (NDYA…VLNK).

The protein is Putative ankyrin repeat protein R873 of Acanthamoeba polyphaga mimivirus (APMV).